Reading from the N-terminus, the 660-residue chain is Pescadillo homolog (660 aa).

Disordered regions lie at residues 313 to 358 (VESD…SYSS) and 471 to 660 (PELY…EKKA). The span at 331-342 (EEKPSDAIDKFE) shows a compositional bias: basic and acidic residues. The BRCT domain occupies 360-476 (DPAQLFSRLT…ELKSPELYGP (117 aa)). Positions 501 to 659 (LEEQQSEGEA…KRRRLEKEKK (159 aa)) form a coiled coil. Over residues 504–566 (QQSEGEAIDA…EEGSEDEEES (63 aa)) the composition is skewed to acidic residues. Basic and acidic residues predominate over residues 584–619 (VKGDKKMDAKTKAKLEAKKALERKKKSEAEDLERAK).

The protein belongs to the pescadillo family. In terms of assembly, component of the NOP7 complex, composed of ERB1, NOP7 and YTM1. The complex is held together by ERB1, which interacts with NOP7 via its N-terminal domain and with YTM1 via a high-affinity interaction between the seven-bladed beta-propeller domains of the 2 proteins. The NOP7 complex associates with the 66S pre-ribosome.

It is found in the nucleus. The protein localises to the nucleolus. It localises to the nucleoplasm. Its function is as follows. Component of the NOP7 complex, which is required for maturation of the 25S and 5.8S ribosomal RNAs and formation of the 60S ribosome. The polypeptide is Pescadillo homolog (Chaetomium globosum (strain ATCC 6205 / CBS 148.51 / DSM 1962 / NBRC 6347 / NRRL 1970) (Soil fungus)).